Here is a 151-residue protein sequence, read N- to C-terminus: Peptide methionine sulfoxide reductase MsrB (151 aa).

Residues 9 to 132 (DGELKRTLTK…NSAALKFIPF (124 aa)) enclose the MsrB domain. Cys121 serves as the catalytic Nucleophile.

It belongs to the MsrB Met sulfoxide reductase family.

It carries out the reaction L-methionyl-[protein] + [thioredoxin]-disulfide + H2O = L-methionyl-(R)-S-oxide-[protein] + [thioredoxin]-dithiol. This is Peptide methionine sulfoxide reductase MsrB from Mycoplasma pneumoniae (strain ATCC 29342 / M129 / Subtype 1) (Mycoplasmoides pneumoniae).